Here is a 197-residue protein sequence, read N- to C-terminus: Recombination protein RecR (197 aa).

The C4-type zinc-finger motif lies at 55–70 (CVQCRDFTESEICTIC). Residues 78–173 (QQLCVVESPA…RPSRLAQGMP (96 aa)) enclose the Toprim domain.

It belongs to the RecR family.

Functionally, may play a role in DNA repair. It seems to be involved in an RecBC-independent recombinational process of DNA repair. It may act with RecF and RecO. This Xanthomonas oryzae pv. oryzae (strain MAFF 311018) protein is Recombination protein RecR.